The chain runs to 172 residues: Large ribosomal subunit protein uL10 (172 aa).

It belongs to the universal ribosomal protein uL10 family. As to quaternary structure, part of the ribosomal stalk of the 50S ribosomal subunit. The N-terminus interacts with L11 and the large rRNA to form the base of the stalk. The C-terminus forms an elongated spine to which L12 dimers bind in a sequential fashion forming a multimeric L10(L12)X complex.

Functionally, forms part of the ribosomal stalk, playing a central role in the interaction of the ribosome with GTP-bound translation factors. The sequence is that of Large ribosomal subunit protein uL10 from Lawsonia intracellularis (strain PHE/MN1-00).